A 773-amino-acid polypeptide reads, in one-letter code: Disintegrin and metalloproteinase domain-containing protein 11 (773 aa).

The N-terminal stretch at 1-24 (MRRLRRWAIAALLLLPLLPPPGLG) is a signal peptide. Positions 25–229 (ALGPRGALHW…PNWPKLRRKR (205 aa)) are excised as a propeptide. The disordered stretch occupies residues 36-82 (SSAHVGSPESPEGSEVTEPSRLVRQSSGGEVRKPQLDTRVRQDPPRG). Positions 65-79 (EVRKPQLDTRVRQDP) are enriched in basic and acidic residues. N-linked (GlcNAc...) asparagine glycosylation is found at asparagine 100 and asparagine 167. At 230 to 738 (QVRRGHPTVH…ERYKGPSGTN (509 aa)) the chain is on the extracellular side. The region spanning 243–442 (KYVELIVIND…GGGSCLFNKP (200 aa)) is the Peptidase M12B domain. Residues 336 to 773 (GRTFQSTSSG…NIRRGRSGGA (438 aa)) form a required for localization to cerebellar cortex basket cell terminals. Also required for localization of KCNA1, KCNA2, DLG4 and ADAM22 to cerebellar cortex basket cell terminal perisomatic axons and pinceaux region. Disulfide bonds link cysteine 353-cysteine 437, cysteine 396-cysteine 421, cysteine 398-cysteine 405, and cysteine 507-cysteine 527. The region spanning 448-535 (PPECGNGFVE…QCPPNLHKLD (88 aa)) is the Disintegrin domain. 2 N-linked (GlcNAc...) asparagine glycosylation sites follow: asparagine 609 and asparagine 677. Intrachain disulfides connect cysteine 681–cysteine 696, cysteine 690–cysteine 702, and cysteine 704–cysteine 713. The 33-residue stretch at 681-713 (CPGSGERRICSHHGVCSNEGKCICQPDWTGKDC) folds into the EGF-like domain. The helical transmembrane segment at 739–759 (IIIGSIAGAVLVAAIVLGGTG) threads the bilayer. The Cytoplasmic portion of the chain corresponds to 760–773 (WGFKNIRRGRSGGA).

As to quaternary structure, interacts with LGI1 and LGI4. Interacts with KCNA1/KV1.1, KCNA2/KV1.2, DLG4/PSD-95 and ADAM22. Post-translationally, the precursor is cleaved by a furin endopeptidase. Abundantly expressed in cerebellar cortex basket cell terminals and pinceaux, weakly expressed in Purkinje cells (at protein level). Weakly expressed in the heart. Abundantly in expressed in neurons throughout the central nervous system including the telencephalon, diencephalic and brainstem nuclei, cerebellum and spinal cord. Expressed in the peripheral nervous system trigeminal and dorsal root ganglia. Expressed in the ganglion and bipolar cells of the retinae and weakly in the cornea of the eyes. Expressed in the hepatocytes of the parenchyma and hepatic lobules of the liver. Expressed in distinct focal areas in the juxtamedullary cortex of the kidney. Expressed in spermatocytes in the seminiferous tubules of the testes. Expressed in the stratum spinosum of the stratified squamous epithelia of the tongue and esophagus.

The protein resides in the presynaptic cell membrane. The protein localises to the perikaryon. Its subcellular location is the cell projection. It localises to the axon. Probable ligand for integrin in the brain. This is a non catalytic metalloprotease-like protein. Required for localization of the potassium channel subunit proteins KCNA1/KV1.1 and KCNA2/KV1.2 at cerebellar cortex basket cell distal terminals, is thereby involved in ephaptic inhibitory synchronization of Purkinje cell firing and response to stress. Plays a role in spatial learning and motor coordination. Involved in the nociceptive pain response to chemical-derived stimulation. This is Disintegrin and metalloproteinase domain-containing protein 11 (Adam11) from Mus musculus (Mouse).